The sequence spans 433 residues: Trigger factor (433 aa).

Residues 163 to 248 (GDTVNIDFSG…VNEIKFKEVP (86 aa)) enclose the PPIase FKBP-type domain.

Belongs to the FKBP-type PPIase family. Tig subfamily.

The protein localises to the cytoplasm. The enzyme catalyses [protein]-peptidylproline (omega=180) = [protein]-peptidylproline (omega=0). Involved in protein export. Acts as a chaperone by maintaining the newly synthesized protein in an open conformation. Functions as a peptidyl-prolyl cis-trans isomerase. The polypeptide is Trigger factor (Staphylococcus aureus (strain Newman)).